Consider the following 417-residue polypeptide: 4-hydroxy-3-methylbut-2-en-1-yl diphosphate synthase (flavodoxin) (417 aa).

4 residues coordinate [4Fe-4S] cluster: Cys-304, Cys-307, Cys-350, and Glu-357.

Belongs to the IspG family. [4Fe-4S] cluster serves as cofactor.

It catalyses the reaction (2E)-4-hydroxy-3-methylbut-2-enyl diphosphate + oxidized [flavodoxin] + H2O + 2 H(+) = 2-C-methyl-D-erythritol 2,4-cyclic diphosphate + reduced [flavodoxin]. Its pathway is isoprenoid biosynthesis; isopentenyl diphosphate biosynthesis via DXP pathway; isopentenyl diphosphate from 1-deoxy-D-xylulose 5-phosphate: step 5/6. Converts 2C-methyl-D-erythritol 2,4-cyclodiphosphate (ME-2,4cPP) into 1-hydroxy-2-methyl-2-(E)-butenyl 4-diphosphate. The chain is 4-hydroxy-3-methylbut-2-en-1-yl diphosphate synthase (flavodoxin) from Sinorhizobium medicae (strain WSM419) (Ensifer medicae).